The sequence spans 263 residues: Pyruvate formate-lyase-activating enzyme (263 aa).

Residues 23 to 260 enclose the Radical SAM core domain; sequence VDGPGIRFVV…TETYEEYKKR (238 aa). [4Fe-4S] cluster-binding residues include Cys37, Cys41, and Cys44. S-adenosyl-L-methionine is bound by residues 43–45, Gly87, 142–144, and His215; these read YCH and DIK.

The protein belongs to the organic radical-activating enzymes family. It depends on [4Fe-4S] cluster as a cofactor.

Its subcellular location is the cytoplasm. The enzyme catalyses glycyl-[formate C-acetyltransferase] + reduced [flavodoxin] + S-adenosyl-L-methionine = glycin-2-yl radical-[formate C-acetyltransferase] + semiquinone [flavodoxin] + 5'-deoxyadenosine + L-methionine + H(+). Functionally, activation of pyruvate formate-lyase under anaerobic conditions by generation of an organic free radical, using S-adenosylmethionine and reduced flavodoxin as cosubstrates to produce 5'-deoxy-adenosine. This Streptococcus mutans serotype c (strain ATCC 700610 / UA159) protein is Pyruvate formate-lyase-activating enzyme (act).